Consider the following 524-residue polypeptide: Phytoene desaturase (neurosporene-forming) (524 aa).

Position 12 to 45 (12 to 45 (VVIGAGLGGLAAAMRLGAKGYKVTVVDRLDRPGG)) interacts with FAD. The tract at residues 500 to 524 (PDAPKPETPAAAAPKARTPRAKAAQ) is disordered. A compositionally biased stretch (low complexity) spans 507 to 524 (TPAAAAPKARTPRAKAAQ).

Belongs to the carotenoid/retinoid oxidoreductase family. The cofactor is FAD.

It carries out the reaction 15-cis-phytoene + 3 A = all-trans-neurosporene + 3 AH2. It participates in carotenoid biosynthesis. With respect to regulation, is inhibited by diphenylamine (DPA). Is also slightly inhibited by NAD, NADP or ATP in the presence of FAD. Its function is as follows. Converts phytoene into all-trans-neurosporene as the major product, via the intermediary of phytofluene and zeta-carotene, by the introduction of three double bonds. Both intermediates, phytofluene and zeta-carotene, can be used as substrates and converted to neurosporene. 1,2-epoxy phytoene is also a suitable substrate whereas the C30 diapophytoene is not. In Rhodobacter capsulatus (strain ATCC BAA-309 / NBRC 16581 / SB1003), this protein is Phytoene desaturase (neurosporene-forming) (crtI).